Reading from the N-terminus, the 55-residue chain is Large ribosomal subunit protein bL33m (55 aa).

This sequence belongs to the bacterial ribosomal protein bL33 family. Component of the mitochondrial large ribosomal subunit (mt-LSU). Mature yeast 74S mitochondrial ribosomes consist of a small (37S) and a large (54S) subunit. The 37S small subunit contains a 15S ribosomal RNA (15S mt-rRNA) and at least 32 different proteins. The 54S large subunit contains a 21S rRNA (21S mt-rRNA) and at least 45 different proteins. bL33m stabilizes the tRNA acceptor stem in the E-site.

It is found in the mitochondrion. Component of the mitochondrial ribosome (mitoribosome), a dedicated translation machinery responsible for the synthesis of mitochondrial genome-encoded proteins, including at least some of the essential transmembrane subunits of the mitochondrial respiratory chain. The mitoribosomes are attached to the mitochondrial inner membrane and translation products are cotranslationally integrated into the membrane. In Schizosaccharomyces pombe (strain 972 / ATCC 24843) (Fission yeast), this protein is Large ribosomal subunit protein bL33m (mrpl39).